The sequence spans 127 residues: MSNRKPYVRDMKRTWWSNHPFYRFYMLREATVLPLILFTLFLTFGLGSLVKGPEAWEGWLSFMANPIVVGINIVALLGSLLHAQTFFSMMPQVMPIRLKGKLVDKRIIVLTQWAAVAFISLIVLMVV.

3 helical membrane passes run 30–50, 58–78, and 107–127; these read ATVL…GSLV, GWLS…ALLG, and IIVL…LMVV.

Belongs to the FrdC family. Part of an enzyme complex containing four subunits: a flavoprotein (FrdA), an iron-sulfur protein (FrdB), and two hydrophobic anchor proteins (FrdC and FrdD).

The protein localises to the cell inner membrane. In terms of biological role, anchors the catalytic components of the fumarate reductase complex to the cell membrane, binds quinones. The protein is Fumarate reductase subunit C of Vibrio atlanticus (strain LGP32) (Vibrio splendidus (strain Mel32)).